The following is a 314-amino-acid chain: WD repeat domain-containing protein 83 (314 aa).

WD repeat units follow at residues cysteine 23–threonine 62, glycine 65–lysine 104, glycine 107–isoleucine 146, glutamate 151–aspartate 188, tyrosine 189–glutamate 228, glycine 231–lysine 272, and valine 275–glycine 313.

Belongs to the WD repeat MORG1 family.

It localises to the cytoplasm. In terms of biological role, molecular scaffold protein for various multimeric protein complexes. Acts as a module in the assembly of a multicomponent scaffold for the ERK pathway, linking ERK responses to specific agonists. Also involved in response to hypoxia by acting as a negative regulator of HIF1A/HIF-1-alpha. This chain is WD repeat domain-containing protein 83 (wdr83), found in Xenopus tropicalis (Western clawed frog).